The following is a 106-amino-acid chain: uncharacterized protein (106 aa).

This is an uncharacterized protein from Archaeoglobus fulgidus (strain ATCC 49558 / DSM 4304 / JCM 9628 / NBRC 100126 / VC-16).